The primary structure comprises 264 residues: [LysW]-aminoadipate/[LysW]-glutamate kinase (264 aa).

Substrate-binding positions include 35–36, R62, and N167; that span reads GG.

It belongs to the acetylglutamate kinase family. LysZ subfamily.

It is found in the cytoplasm. The catalysed reaction is [amino-group carrier protein]-C-terminal-N-(1,4-dicarboxybutan-1-yl)-L-glutamine + ATP = [amino-group carrier protein]-C-terminal-N-(1-carboxy-5-phosphooxy-5-oxopentan-1-yl)-L-glutamine + ADP. It catalyses the reaction [amino-group carrier protein]-C-terminal-gamma-(L-glutamyl)-L-glutamate + ATP = [amino-group carrier protein]-C-terminal-gamma-(5-phospho-L-glutamyl)-L-glutamate + ADP. It functions in the pathway amino-acid biosynthesis; L-lysine biosynthesis via AAA pathway; L-lysine from L-alpha-aminoadipate (Thermus route): step 2/5. The protein operates within amino-acid biosynthesis; L-arginine biosynthesis. In terms of biological role, involved in both the arginine and lysine biosynthetic pathways. Phosphorylates the LysW-bound precursors glutamate (for arginine biosynthesis), respectively alpha-aminoadipate (for lysine biosynthesis). In Saccharolobus solfataricus (strain ATCC 35092 / DSM 1617 / JCM 11322 / P2) (Sulfolobus solfataricus), this protein is [LysW]-aminoadipate/[LysW]-glutamate kinase.